Consider the following 167-residue polypeptide: Lipoprotein signal peptidase (167 aa).

Transmembrane regions (helical) follow at residues 8-28 (TFLT…VVLL), 46-66 (WGHF…FGLF), 70-90 (KIPL…FLGI), and 101-121 (IALT…LFHG). Residues Asp125 and Asp143 contribute to the active site. A helical transmembrane segment spans residues 139 to 159 (FNLADAFISLGTLLLVGHLYF).

The protein belongs to the peptidase A8 family.

The protein resides in the cell inner membrane. It carries out the reaction Release of signal peptides from bacterial membrane prolipoproteins. Hydrolyzes -Xaa-Yaa-Zaa-|-(S,diacylglyceryl)Cys-, in which Xaa is hydrophobic (preferably Leu), and Yaa (Ala or Ser) and Zaa (Gly or Ala) have small, neutral side chains.. It participates in protein modification; lipoprotein biosynthesis (signal peptide cleavage). This protein specifically catalyzes the removal of signal peptides from prolipoproteins. This chain is Lipoprotein signal peptidase, found in Chlamydia muridarum (strain MoPn / Nigg).